The sequence spans 879 residues: Alanine--tRNA ligase (879 aa).

Zn(2+)-binding residues include His-566, His-570, Cys-668, and His-672.

Belongs to the class-II aminoacyl-tRNA synthetase family. It depends on Zn(2+) as a cofactor.

It is found in the cytoplasm. The catalysed reaction is tRNA(Ala) + L-alanine + ATP = L-alanyl-tRNA(Ala) + AMP + diphosphate. Functionally, catalyzes the attachment of alanine to tRNA(Ala) in a two-step reaction: alanine is first activated by ATP to form Ala-AMP and then transferred to the acceptor end of tRNA(Ala). Also edits incorrectly charged Ser-tRNA(Ala) and Gly-tRNA(Ala) via its editing domain. The sequence is that of Alanine--tRNA ligase from Halalkalibacterium halodurans (strain ATCC BAA-125 / DSM 18197 / FERM 7344 / JCM 9153 / C-125) (Bacillus halodurans).